The sequence spans 908 residues: 26S proteasome non-ATPase regulatory subunit 2 (908 aa).

The residue at position 1 (methionine 1) is an N-acetylmethionine. A disordered region spans residues 1-51 (MEEGGRDKTPVQSQQPSATTPSGADEKSSGKERRDAGEKDKEQELSEEDKQ). 2 positions are modified to phosphothreonine: threonine 9 and threonine 20. A compositionally biased stretch (polar residues) spans 10–22 (PVQSQQPSATTPS). The segment covering 24–51 (ADEKSSGKERRDAGEKDKEQELSEEDKQ) has biased composition (basic and acidic residues). Residues serine 29 and serine 147 each carry the phosphoserine modification. Tyrosine 194 is subject to Phosphotyrosine. Phosphoserine occurs at positions 361 and 363. PC repeat units lie at residues 409-442 (SAAA…YIKS), 443-479 (GALL…TMRL), 480-514 (GSIF…SMEV), 517-551 (VTAL…TELK), and 560-589 (LGLG…PFRS). The residue at position 551 (lysine 551) is an N6-acetyllysine. The segment covering 623–643 (KEKEEDKDKKEKKDKDKKEAP) has biased composition (basic and acidic residues). The disordered stretch occupies residues 623–645 (KEKEEDKDKKEKKDKDKKEAPAD). PC repeat units lie at residues 692-723 (LALA…EVSY) and 742-757 (AAML…KDPN). The required for interaction with UBLCP1 stretch occupies residues 708 to 903 (DTLSKFSHDA…LEGFVILRKN (196 aa)).

It belongs to the proteasome subunit S2 family. As to quaternary structure, component of the 19S proteasome regulatory particle complex. The 26S proteasome consists of a 20S core particle (CP) and two 19S regulatory subunits (RP). The regulatory particle is made of a lid composed of 9 subunits, a base containing 6 ATPases and few additional components including PSMD2. Interacts with RPGRIP1L. Interacts with CRY1 in a KDM8-dependent manner. Interacts (via C-terminus) with phosphatase UBLCP1 (via ubiquitin-like domain); the interaction recruits UBLCP1 to the 19S regulatory particle where it dephosphorylates 19S subunit PSMC2/RPT1 which impairs PSMC2 ATPase activity and disrupts 26S proteasome assembly.

In terms of biological role, component of the 26S proteasome, a multiprotein complex involved in the ATP-dependent degradation of ubiquitinated proteins. This complex plays a key role in the maintenance of protein homeostasis by removing misfolded or damaged proteins, which could impair cellular functions, and by removing proteins whose functions are no longer required. Therefore, the proteasome participates in numerous cellular processes, including cell cycle progression, apoptosis, or DNA damage repair. Its function is as follows. Binds to the intracellular domain of tumor necrosis factor type 1 receptor. The binding domain of TRAP1 and TRAP2 resides outside the death domain of TNFR1. This chain is 26S proteasome non-ATPase regulatory subunit 2 (Psmd2), found in Mus musculus (Mouse).